The primary structure comprises 152 residues: UPF0178 protein SAB0630c (152 aa).

Belongs to the UPF0178 family.

This is UPF0178 protein SAB0630c from Staphylococcus aureus (strain bovine RF122 / ET3-1).